A 242-amino-acid polypeptide reads, in one-letter code: Methylthioribulose-1-phosphate dehydratase (242 aa).

Residues 1–11 are compositionally biased toward basic and acidic residues; that stretch reads MAQEIQKENND. A disordered region spans residues 1–20; it reads MAQEIQKENNDHLVQSSDPE. Cys100 lines the substrate pocket. The Zn(2+) site is built by His117 and His119. Residue Glu146 is the Proton donor/acceptor of the active site. Zn(2+) is bound at residue His202.

It belongs to the aldolase class II family. MtnB subfamily. Zn(2+) serves as cofactor.

The protein resides in the cytoplasm. The catalysed reaction is 5-(methylsulfanyl)-D-ribulose 1-phosphate = 5-methylsulfanyl-2,3-dioxopentyl phosphate + H2O. Its pathway is amino-acid biosynthesis; L-methionine biosynthesis via salvage pathway; L-methionine from S-methyl-5-thio-alpha-D-ribose 1-phosphate: step 2/6. In terms of biological role, catalyzes the dehydration of methylthioribulose-1-phosphate (MTRu-1-P) into 2,3-diketo-5-methylthiopentyl-1-phosphate (DK-MTP-1-P). The chain is Methylthioribulose-1-phosphate dehydratase from Aspergillus niger (strain ATCC MYA-4892 / CBS 513.88 / FGSC A1513).